Here is an 859-residue protein sequence, read N- to C-terminus: MTADLSQHTPMMQQYLGIKAEHPDQLVFYRMGDFYELFFGDAQKAARLLDITLTQRGQSAGKPIPMAGIPYHAAENYLARLVKLGESVAIAEQIGDPALAKGPVERKVVRIVTPGTVSDEALLEERRDNLLCAVFDHNNQYGCASLDLAAGRFLVTQVEGAEQLQALLERWSPAELLISEEHGLPGRWSDRPGTRKRPSWEFDEDAARRQLCQQFQVQDLAGFGEPSPVAVSAAGALLGYAKETQRGELPHITGLTVESFDDAVAMDAATRRNLELTETLDGQEQHTLAWVLDSTKTAMGARLLKRWVHQPLRNRTTLTQRQDQIDALRQGWCFESARDVLNDIGDMERILGRVALRSARPRDLTRLHASLKALPPLIGTLPAADCFCELIERIGQFPNQVELLGTAVIENPPMLIRDGGVIAPGYSEELDELRSISENAGAILVDIETRERERTQLSTLRVKYNRVHGYYIELSRRESDQAPTDYQRRQTLKNAERFITPELKEFEDKALSASSKALALEKRLYEALLEKVAADLHALQRSAAAVAELDVLASLAERAEALNWVLPQLVDDEAIIEIVDGRHPVVEQVLDDAFVPNSLHLDNARRMVIITGPNMGGKSTYMRQTALIALLAHLGSCVPAASARIGSLDRIFTRIGSSDDLAGGRSTFMVEMSETANILNNATAQSLVLMDEIGRGTSTFDGLSLAWAAAEHLARNLKSFTLFATHYFELTQLPEQLPGIYNAHLTASEHDNRIVFLHRVQEGPASRSYGLQVAQLAGVPSSVIHRAGEKLRELEQSKPLAPSATPPSSYAAPSPAAAPAQASLFNEPNAIELALTDLDPDELTPKQALEALYTLKKLT.

612 to 619 contacts ATP; it reads GPNMGGKS. Residues 797–822 are disordered; that stretch reads SKPLAPSATPPSSYAAPSPAAAPAQA.

The protein belongs to the DNA mismatch repair MutS family.

Functionally, this protein is involved in the repair of mismatches in DNA. It is possible that it carries out the mismatch recognition step. This protein has a weak ATPase activity. This chain is DNA mismatch repair protein MutS, found in Alcanivorax borkumensis (strain ATCC 700651 / DSM 11573 / NCIMB 13689 / SK2).